The primary structure comprises 205 residues: Methylamine utilization protein MauD (205 aa).

Residues 5 to 25 (IMIASNVLLWGAFLALAALML) traverse the membrane as a helical segment. In terms of domain architecture, Thioredoxin spans 50-184 (PDIGERSPVF…VESLFETTRV (135 aa)).

It is found in the membrane. The protein operates within one-carbon metabolism; methylamine degradation. Its function is as follows. May be specifically involved in the processing, transport, and/or maturation of the MADH beta-subunit. This is Methylamine utilization protein MauD (mauD) from Methylobacillus flagellatus (strain ATCC 51484 / DSM 6875 / VKM B-1610 / KT).